The following is a 180-amino-acid chain: Large ribosomal subunit protein uL6 (180 aa).

Belongs to the universal ribosomal protein uL6 family. In terms of assembly, part of the 50S ribosomal subunit.

In terms of biological role, this protein binds to the 23S rRNA, and is important in its secondary structure. It is located near the subunit interface in the base of the L7/L12 stalk, and near the tRNA binding site of the peptidyltransferase center. The chain is Large ribosomal subunit protein uL6 from Picosynechococcus sp. (strain ATCC 27264 / PCC 7002 / PR-6) (Agmenellum quadruplicatum).